A 254-amino-acid chain; its full sequence is Small ribosomal subunit protein eS1 (254 aa).

The residue at position 2 (alanine 2) is an N-acetylalanine; partial.

This sequence belongs to the eukaryotic ribosomal protein eS1 family. Component of the small ribosomal subunit. Mature ribosomes consist of a small (40S) and a large (60S) subunit. The 40S subunit contains about 33 different proteins and 1 molecule of RNA (18S). The 60S subunit contains about 49 different proteins and 3 molecules of RNA (25S, 5.8S and 5S).

It is found in the cytoplasm. The sequence is that of Small ribosomal subunit protein eS1 from Zygosaccharomyces rouxii (strain ATCC 2623 / CBS 732 / NBRC 1130 / NCYC 568 / NRRL Y-229).